The primary structure comprises 451 residues: Glycine--tRNA ligase (451 aa).

Arg-94 and Glu-164 together coordinate substrate. Residues 196–198, 206–211, 281–282, and 325–328 each bind ATP; these read RNE, FRTREF, EL, and GVER. Substrate is bound at residue 211–215; the sequence is FEQME. 321–325 is a binding site for substrate; it reads EPSVG.

This sequence belongs to the class-II aminoacyl-tRNA synthetase family. As to quaternary structure, homodimer.

It localises to the cytoplasm. The enzyme catalyses tRNA(Gly) + glycine + ATP = glycyl-tRNA(Gly) + AMP + diphosphate. Catalyzes the attachment of glycine to tRNA(Gly). This is Glycine--tRNA ligase from Mesoplasma florum (strain ATCC 33453 / NBRC 100688 / NCTC 11704 / L1) (Acholeplasma florum).